The sequence spans 144 residues: Granulocyte-macrophage colony-stimulating factor (144 aa).

A signal peptide spans 1-17 (MWLQSLLLLGTVACSIS). 3 O-linked (GalNAc...) serine glycosylation sites follow: Ser-22, Ser-24, and Ser-26. Thr-27 carries an O-linked (GalNAc...) threonine; partial glycan. N-linked (GlcNAc...) asparagine glycosylation is found at Asn-44 and Asn-54. 2 cysteine pairs are disulfide-bonded: Cys-71–Cys-113 and Cys-105–Cys-138.

The protein belongs to the GM-CSF family. In terms of assembly, monomer. The signaling GM-CSF receptor complex is a dodecamer of two head-to-head hexamers of two alpha, two beta, and two ligand subunits.

The protein localises to the secreted. In terms of biological role, cytokine that stimulates the growth and differentiation of hematopoietic precursor cells from various lineages, including granulocytes, macrophages, eosinophils and erythrocytes. This is Granulocyte-macrophage colony-stimulating factor (CSF2) from Homo sapiens (Human).